Consider the following 369-residue polypeptide: S-adenosylmethionine decarboxylase proenzyme 2 (369 aa).

Active-site residues include Glu9 and Glu12. Ser69 (schiff-base intermediate with substrate; via pyruvic acid) is an active-site residue. At Ser69 the chain carries Pyruvic acid (Ser); by autocatalysis. Residue Cys83 is the Proton donor; for catalytic activity of the active site. Catalysis depends on proton acceptor; for processing activity residues Ser236 and His249.

The protein belongs to the eukaryotic AdoMetDC family. Pyruvate serves as cofactor. In terms of processing, is synthesized initially as an inactive proenzyme. Formation of the active enzyme involves a self-maturation process in which the active site pyruvoyl group is generated from an internal serine residue via an autocatalytic post-translational modification. Two non-identical subunits are generated from the proenzyme in this reaction, and the pyruvate is formed at the N-terminus of the alpha chain, which is derived from the carboxyl end of the proenzyme. The post-translation cleavage follows an unusual pathway, termed non-hydrolytic serinolysis, in which the side chain hydroxyl group of the serine supplies its oxygen atom to form the C-terminus of the beta chain, while the remainder of the serine residue undergoes an oxidative deamination to produce ammonia and the pyruvoyl group blocking the N-terminus of the alpha chain.

The catalysed reaction is S-adenosyl-L-methionine + H(+) = S-adenosyl 3-(methylsulfanyl)propylamine + CO2. It participates in amine and polyamine biosynthesis; S-adenosylmethioninamine biosynthesis; S-adenosylmethioninamine from S-adenosyl-L-methionine: step 1/1. The chain is S-adenosylmethionine decarboxylase proenzyme 2 (SAMDC2) from Brassica juncea (Indian mustard).